Consider the following 531-residue polypeptide: uncharacterized protein (531 aa).

The first 22 residues, 1 to 22 (MRLQFKLLGFLTLLGTSTILSA), serve as a signal peptide directing secretion. The N-palmitoyl cysteine moiety is linked to residue cysteine 23. The S-diacylglycerol cysteine moiety is linked to residue cysteine 23. The disordered stretch occupies residues 31 to 51 (EPNNIEESGPITPTTPTTDVP). Low complexity predominate over residues 40-51 (PITPTTPTTDVP).

The protein belongs to the MG067/MG068/MG395 family.

The protein localises to the cell membrane. This is an uncharacterized protein from Mycoplasma pneumoniae (strain ATCC 29342 / M129 / Subtype 1) (Mycoplasmoides pneumoniae).